The primary structure comprises 184 residues: Phosducin-like protein 3 (184 aa).

The tract at residues 45 to 184 (HGELKEIDEQ…VKNNKFKEDD (140 aa)) is thioredoxin fold.

It belongs to the phosducin family.

This Dictyostelium discoideum (Social amoeba) protein is Phosducin-like protein 3 (phlp3).